Consider the following 287-residue polypeptide: ATP synthase gamma chain (287 aa).

This sequence belongs to the ATPase gamma chain family. In terms of assembly, F-type ATPases have 2 components, CF(1) - the catalytic core - and CF(0) - the membrane proton channel. CF(1) has five subunits: alpha(3), beta(3), gamma(1), delta(1), epsilon(1). CF(0) has three main subunits: a, b and c.

It is found in the cell inner membrane. Its function is as follows. Produces ATP from ADP in the presence of a proton gradient across the membrane. The gamma chain is believed to be important in regulating ATPase activity and the flow of protons through the CF(0) complex. The polypeptide is ATP synthase gamma chain (Salmonella paratyphi A (strain ATCC 9150 / SARB42)).